We begin with the raw amino-acid sequence, 300 residues long: 4-diphosphocytidyl-2-C-methyl-D-erythritol kinase (300 aa).

The active site involves K17. 102–112 provides a ligand contact to ATP; it reads PVAAGIGGGSA. The active site involves D144.

Belongs to the GHMP kinase family. IspE subfamily.

The catalysed reaction is 4-CDP-2-C-methyl-D-erythritol + ATP = 4-CDP-2-C-methyl-D-erythritol 2-phosphate + ADP + H(+). It participates in isoprenoid biosynthesis; isopentenyl diphosphate biosynthesis via DXP pathway; isopentenyl diphosphate from 1-deoxy-D-xylulose 5-phosphate: step 3/6. Catalyzes the phosphorylation of the position 2 hydroxy group of 4-diphosphocytidyl-2C-methyl-D-erythritol. The chain is 4-diphosphocytidyl-2-C-methyl-D-erythritol kinase from Bradyrhizobium sp. (strain ORS 278).